The following is a 173-amino-acid chain: Co-chaperone protein HscB homolog (173 aa).

Residues asparagine 2–leucine 74 enclose the J domain.

It belongs to the HscB family. Interacts with HscA and stimulates its ATPase activity.

Its function is as follows. Co-chaperone involved in the maturation of iron-sulfur cluster-containing proteins. Seems to help targeting proteins to be folded toward HscA. This Shewanella loihica (strain ATCC BAA-1088 / PV-4) protein is Co-chaperone protein HscB homolog.